The sequence spans 600 residues: Prostaglandin G/H synthase 1 (600 aa).

The first 24 residues, 1–24 (MSRQGISLRFPLLLLLLSPSPVLP), serve as a signal peptide directing secretion. The 39-residue stretch at 32–70 (PVNPCCYYPCQHQGICVRFGLDRYQCDCTRTGYYGPNCT) folds into the EGF-like domain. 4 disulfide bridges follow: C36/C47, C37/C159, C41/C57, and C59/C69. Residues N68, N104, and N144 are each glycosylated (N-linked (GlcNAc...) asparagine). H207 (proton acceptor) is an active-site residue. Y385 acts as the For cyclooxygenase activity in catalysis. Residue H388 coordinates heme b. The N-linked (GlcNAc...) asparagine glycan is linked to N410. Cysteines 569 and 575 form a disulfide.

This sequence belongs to the prostaglandin G/H synthase family. Homodimer. It depends on heme b as a cofactor.

The protein resides in the microsome membrane. It is found in the endoplasmic reticulum membrane. It carries out the reaction (5Z,8Z,11Z,14Z)-eicosatetraenoate + AH2 + 2 O2 = prostaglandin H2 + A + H2O. It catalyses the reaction (5Z,8Z,11Z,14Z)-eicosatetraenoate + 2 O2 = prostaglandin G2. The catalysed reaction is prostaglandin G2 + AH2 = prostaglandin H2 + A + H2O. The enzyme catalyses (9Z,12Z)-octadecadienoate + AH2 + O2 = (9R)-hydroxy-(10E,12Z)-octadecadienoate + A + H2O. It carries out the reaction (9Z,12Z)-octadecadienoate + AH2 + O2 = (9S)-hydroxy-(10E,12Z)-octadecadienoate + A + H2O. It catalyses the reaction (9Z,12Z)-octadecadienoate + AH2 + O2 = (13S)-hydroxy-(9Z,11E)-octadecadienoate + A + H2O. The catalysed reaction is (9Z,12Z)-octadecadienoate + AH2 + O2 = (13R)-hydroxy-(9Z,11E)-octadecadienoate + A + H2O. The protein operates within lipid metabolism; prostaglandin biosynthesis. Its activity is regulated as follows. The cyclooxygenase activity is inhibited by nonsteroidal anti-inflammatory drugs (NSAIDs) including ibuprofen, flurbiprofen, ketoprofen, naproxen, flurbiprofen, anirolac, fenclofenac and diclofenac. Dual cyclooxygenase and peroxidase that plays an important role in the biosynthesis pathway of prostanoids, a class of C20 oxylipins mainly derived from arachidonate ((5Z,8Z,11Z,14Z)-eicosatetraenoate, AA, C20:4(n-6)), with a particular role in the inflammatory response. The cyclooxygenase activity oxygenates AA to the hydroperoxy endoperoxide prostaglandin G2 (PGG2), and the peroxidase activity reduces PGG2 to the hydroxy endoperoxide prostaglandin H2 (PGH2), the precursor of all 2-series prostaglandins and thromboxanes. This complex transformation is initiated by abstraction of hydrogen at carbon 13 (with S-stereochemistry), followed by insertion of molecular O2 to form the endoperoxide bridge between carbon 9 and 11 that defines prostaglandins. The insertion of a second molecule of O2 (bis-oxygenase activity) yields a hydroperoxy group in PGG2 that is then reduced to PGH2 by two electrons. Involved in the constitutive production of prostanoids in particular in the stomach and platelets. In gastric epithelial cells, it is a key step in the generation of prostaglandins, such as prostaglandin E2 (PGE2), which plays an important role in cytoprotection. In platelets, it is involved in the generation of thromboxane A2 (TXA2), which promotes platelet activation and aggregation, vasoconstriction and proliferation of vascular smooth muscle cells. Can also use linoleate (LA, (9Z,12Z)-octadecadienoate, C18:2(n-6)) as substrate and produce hydroxyoctadecadienoates (HODEs) in a regio- and stereospecific manner, being (9R)-HODE ((9R)-hydroxy-(10E,12Z)-octadecadienoate) and (13S)-HODE ((13S)-hydroxy-(9Z,11E)-octadecadienoate) its major products. The protein is Prostaglandin G/H synthase 1 (PTGS1) of Bos taurus (Bovine).